A 180-amino-acid chain; its full sequence is Small ribosomal subunit protein uS4 (180 aa).

Positions 103 to 174 constitute an S4 RNA-binding domain; it reads RRLQTIVYKK…HPERMMIEKA (72 aa).

This sequence belongs to the universal ribosomal protein uS4 family. As to quaternary structure, part of the 30S ribosomal subunit. Contacts protein S5. The interaction surface between S4 and S5 is involved in control of translational fidelity.

Its function is as follows. One of the primary rRNA binding proteins, it binds directly to 16S rRNA where it nucleates assembly of the body of the 30S subunit. In terms of biological role, with S5 and S12 plays an important role in translational accuracy. The sequence is that of Small ribosomal subunit protein uS4 from Pyrococcus horikoshii (strain ATCC 700860 / DSM 12428 / JCM 9974 / NBRC 100139 / OT-3).